We begin with the raw amino-acid sequence, 301 residues long: Acetylglutamate kinase (301 aa).

Substrate is bound by residues 68 to 69 (GG), arginine 90, and asparagine 197.

It belongs to the acetylglutamate kinase family. ArgB subfamily.

The protein localises to the cytoplasm. The catalysed reaction is N-acetyl-L-glutamate + ATP = N-acetyl-L-glutamyl 5-phosphate + ADP. It participates in amino-acid biosynthesis; L-arginine biosynthesis; N(2)-acetyl-L-ornithine from L-glutamate: step 2/4. In terms of biological role, catalyzes the ATP-dependent phosphorylation of N-acetyl-L-glutamate. The sequence is that of Acetylglutamate kinase from Nitrosococcus oceani (strain ATCC 19707 / BCRC 17464 / JCM 30415 / NCIMB 11848 / C-107).